The following is a 120-amino-acid chain: NAD(P)H-quinone oxidoreductase subunit 3, chloroplastic (120 aa).

Helical transmembrane passes span 9-29, 64-84, and 88-108; these read IFWA…LISG, MFAL…PWAM, and VLGV…IVGS.

It belongs to the complex I subunit 3 family. As to quaternary structure, NDH is composed of at least 16 different subunits, 5 of which are encoded in the nucleus.

It localises to the plastid. The protein resides in the chloroplast thylakoid membrane. The catalysed reaction is a plastoquinone + NADH + (n+1) H(+)(in) = a plastoquinol + NAD(+) + n H(+)(out). It catalyses the reaction a plastoquinone + NADPH + (n+1) H(+)(in) = a plastoquinol + NADP(+) + n H(+)(out). Its function is as follows. NDH shuttles electrons from NAD(P)H:plastoquinone, via FMN and iron-sulfur (Fe-S) centers, to quinones in the photosynthetic chain and possibly in a chloroplast respiratory chain. The immediate electron acceptor for the enzyme in this species is believed to be plastoquinone. Couples the redox reaction to proton translocation, and thus conserves the redox energy in a proton gradient. In Gossypium hirsutum (Upland cotton), this protein is NAD(P)H-quinone oxidoreductase subunit 3, chloroplastic.